We begin with the raw amino-acid sequence, 538 residues long: Glutamyl-tRNA(Gln) amidotransferase subunit B, mitochondrial (538 aa).

It belongs to the GatB/GatE family. GatB subfamily. As to quaternary structure, subunit of the heterotrimeric GatCAB amidotransferase (AdT) complex, composed of A, B and C subunits.

It is found in the mitochondrion. The enzyme catalyses L-glutamyl-tRNA(Gln) + L-glutamine + ATP + H2O = L-glutaminyl-tRNA(Gln) + L-glutamate + ADP + phosphate + H(+). In terms of biological role, allows the formation of correctly charged Gln-tRNA(Gln) through the transamidation of misacylated Glu-tRNA(Gln) in the mitochondria. The reaction takes place in the presence of glutamine and ATP through an activated gamma-phospho-Glu-tRNA(Gln). The polypeptide is Glutamyl-tRNA(Gln) amidotransferase subunit B, mitochondrial (Dictyostelium discoideum (Social amoeba)).